The following is a 257-amino-acid chain: Tryptophan synthase alpha chain (257 aa).

Catalysis depends on proton acceptor residues E46 and D57.

Belongs to the TrpA family. In terms of assembly, tetramer of two alpha and two beta chains.

It carries out the reaction (1S,2R)-1-C-(indol-3-yl)glycerol 3-phosphate + L-serine = D-glyceraldehyde 3-phosphate + L-tryptophan + H2O. It participates in amino-acid biosynthesis; L-tryptophan biosynthesis; L-tryptophan from chorismate: step 5/5. Its function is as follows. The alpha subunit is responsible for the aldol cleavage of indoleglycerol phosphate to indole and glyceraldehyde 3-phosphate. In Parabacteroides distasonis (strain ATCC 8503 / DSM 20701 / CIP 104284 / JCM 5825 / NCTC 11152), this protein is Tryptophan synthase alpha chain.